We begin with the raw amino-acid sequence, 269 residues long: Protein-L-isoaspartate O-methyltransferase (269 aa).

Residues 1–53 (MSAGQRPAPKFPLRLDQVKPAGRSGAAPLLRPQRPLHQAATERGRGTTPAGLG) form a disordered region. Serine 113 is a catalytic residue.

Belongs to the methyltransferase superfamily. L-isoaspartyl/D-aspartyl protein methyltransferase family.

The protein localises to the cytoplasm. It carries out the reaction [protein]-L-isoaspartate + S-adenosyl-L-methionine = [protein]-L-isoaspartate alpha-methyl ester + S-adenosyl-L-homocysteine. Functionally, catalyzes the methyl esterification of L-isoaspartyl residues in peptides and proteins that result from spontaneous decomposition of normal L-aspartyl and L-asparaginyl residues. It plays a role in the repair and/or degradation of damaged proteins. This chain is Protein-L-isoaspartate O-methyltransferase, found in Methylibium petroleiphilum (strain ATCC BAA-1232 / LMG 22953 / PM1).